A 156-amino-acid chain; its full sequence is Lipoprotein signal peptidase (156 aa).

Helical transmembrane passes span 5-25 (FKFIFYFWGAFVLVFVLDQWV), 64-84 (YLHLALIVVLFIYLFWQKTLL), and 89-109 (IAFGMMLGAGVSNLLDRFIHG). Residues aspartate 113 and aspartate 130 contribute to the active site. Residues 122 to 142 (NFAIFNVADVMINISVALILI) form a helical membrane-spanning segment.

The protein belongs to the peptidase A8 family.

The protein localises to the cell inner membrane. It carries out the reaction Release of signal peptides from bacterial membrane prolipoproteins. Hydrolyzes -Xaa-Yaa-Zaa-|-(S,diacylglyceryl)Cys-, in which Xaa is hydrophobic (preferably Leu), and Yaa (Ala or Ser) and Zaa (Gly or Ala) have small, neutral side chains.. It participates in protein modification; lipoprotein biosynthesis (signal peptide cleavage). Functionally, this protein specifically catalyzes the removal of signal peptides from prolipoproteins. This Campylobacter jejuni subsp. jejuni serotype O:6 (strain 81116 / NCTC 11828) protein is Lipoprotein signal peptidase.